Reading from the N-terminus, the 239-residue chain is Probable 2-phosphosulfolactate phosphatase (239 aa).

Belongs to the ComB family. The cofactor is Mg(2+).

The enzyme catalyses (2R)-O-phospho-3-sulfolactate + H2O = (2R)-3-sulfolactate + phosphate. The protein is Probable 2-phosphosulfolactate phosphatase of Clostridium botulinum (strain Langeland / NCTC 10281 / Type F).